The sequence spans 380 residues: Crotonobetainyl-CoA reductase (380 aa).

The protein belongs to the acyl-CoA dehydrogenase family. As to quaternary structure, homotetramer. It depends on FAD as a cofactor.

The protein localises to the cytoplasm. It catalyses the reaction 4-(trimethylamino)butanoyl-CoA + oxidized [electron-transfer flavoprotein] + H(+) = crotonobetainyl-CoA + reduced [electron-transfer flavoprotein]. The protein operates within amine and polyamine metabolism; carnitine metabolism. Its function is as follows. Catalyzes the reduction of crotonobetainyl-CoA to gamma-butyrobetainyl-CoA. The chain is Crotonobetainyl-CoA reductase from Citrobacter koseri (strain ATCC BAA-895 / CDC 4225-83 / SGSC4696).